Reading from the N-terminus, the 152-residue chain is MRIGYGEDSHRLEEGRPLYLCGLLIPSPVGALAHSDGDAALHALTDALLSAYGLGDIGLLFPDTDPRWRGERSEVFLREALRLVEARGAKLLQASLVLTLDRPKLGPHRKALVDSLSRLLRLPQDRIGLTFKTSEGLAPSHVQARAVVLLDG.

Positions 8 and 10 each coordinate a divalent metal cation. 4-CDP-2-C-methyl-D-erythritol 2-phosphate is bound by residues 8-10 (DSH) and 34-35 (HS). Residue His42 coordinates a divalent metal cation. 4-CDP-2-C-methyl-D-erythritol 2-phosphate contacts are provided by residues 56–58 (DIG), 61–65 (FPDTD), 100–106 (LDRPKLG), and 131–135 (FKTSE).

This sequence belongs to the IspF family. Homotrimer. A divalent metal cation is required as a cofactor.

It carries out the reaction 4-CDP-2-C-methyl-D-erythritol 2-phosphate = 2-C-methyl-D-erythritol 2,4-cyclic diphosphate + CMP. Its pathway is isoprenoid biosynthesis; isopentenyl diphosphate biosynthesis via DXP pathway; isopentenyl diphosphate from 1-deoxy-D-xylulose 5-phosphate: step 4/6. Functionally, involved in the biosynthesis of isopentenyl diphosphate (IPP) and dimethylallyl diphosphate (DMAPP), two major building blocks of isoprenoid compounds. Catalyzes the conversion of 4-diphosphocytidyl-2-C-methyl-D-erythritol 2-phosphate (CDP-ME2P) to 2-C-methyl-D-erythritol 2,4-cyclodiphosphate (ME-CPP) with a corresponding release of cytidine 5-monophosphate (CMP). The polypeptide is 2-C-methyl-D-erythritol 2,4-cyclodiphosphate synthase (Thermus thermophilus (strain ATCC 27634 / DSM 579 / HB8)).